We begin with the raw amino-acid sequence, 143 residues long: Ninjurin-2 (143 aa).

Topologically, residues 1-61 (MESDRETIHL…KSVLQQGPFA (61 aa)) are extracellular. The interval 26 to 38 (NFYATKKSVAESM) is helix alpha1. The interval 39 to 58 (LDVALFMSNAMRLKSVLQQG) is helix alpha2. The helical transmembrane segment at 62 to 93 (EYYTTLVTLIIVSLLLQVVISLLLVFIAILNL) threads the bilayer. Topologically, residues 94-97 (NEVE) are cytoplasmic. A helical transmembrane segment spans residues 98-127 (NQRHLNKLNNAATILVFITVVINIFITAFG). Lys-104 is a binding site for cholesterol. Over 128–143 (AHHAASMAARTSSNPI) the chain is Extracellular.

Belongs to the ninjurin family. Homooligomer; in response to stimuli, homooligomerizes into filaments. In contrast to NINJ1, the filament is curved toward the intracellular space, preventing its circularization on a relatively flat membrane to mediate plasma membrane rupture: curvature is caused by cholesterol-binding at the cytoplasmic leaflet.

It is found in the cell membrane. Its function is as follows. Its role in unclear. In contrast to NINJ1 paralog, does not mediate plasma membrane rupture (cytolysis) downstream of necroptotic and pyroptotic programmed cell death. While it is able to oligomerize and form filaments, filaments are curved toward the intracellular space, preventing circularization to mediate plasma membrane rupture. May act as a homophilic transmembrane adhesion molecule involved in nerve regeneration. Promotes axonal growth. The chain is Ninjurin-2 (Ninj2) from Mus musculus (Mouse).